Consider the following 166-residue polypeptide: Large ribosomal subunit protein uL10 (166 aa).

It belongs to the universal ribosomal protein uL10 family. Part of the ribosomal stalk of the 50S ribosomal subunit. The N-terminus interacts with L11 and the large rRNA to form the base of the stalk. The C-terminus forms an elongated spine to which L12 dimers bind in a sequential fashion forming a multimeric L10(L12)X complex.

Functionally, forms part of the ribosomal stalk, playing a central role in the interaction of the ribosome with GTP-bound translation factors. This is Large ribosomal subunit protein uL10 from Phytoplasma australiense.